The following is a 224-amino-acid chain: MRVSGVLRLLALIFAIVTTWMFIRSYMSFSMKTIRLPRWLAASPTKEIQVKKYKCGLIKPCPANYFAFKICSGAANVVGPTMCFEDRMIMSPVKNNVGRGLNIALVNGTTGAVLGQKAFDMYSGDVMHLVKFLKEIPGGALVLVASYDDPGTKMNDESRKLFSDLGSSYAKQLGFRDSWVFIGAKDLRGKSPFEQFLKNSPDTNKYEGWPELLEMEGCMPPKPF.

An N-terminal signal peptide occupies residues 1-25; the sequence is MRVSGVLRLLALIFAIVTTWMFIRS. 2 disulfide bridges follow: Cys55-Cys83 and Cys61-Cys218. A GG-type lectin domain is found at 64–222; sequence NYFAFKICSG…LEMEGCMPPK (159 aa). Asn107 carries N-linked (GlcNAc...) asparagine glycosylation.

This sequence belongs to the FAM3 family. Abundantly expressed in placenta and weakly expressed in small intestine.

It is found in the secreted. This chain is Protein FAM3D (FAM3D), found in Homo sapiens (Human).